A 648-amino-acid chain; its full sequence is FAD-binding monooxygenase trt3 (648 aa).

FAD is bound by residues 118 to 121 (TWYW), 130 to 131 (DI), and Tyr136. 128–130 (MCD) lines the NADP(+) pocket. Residues 274 to 280 (TGSTAVQ) and 297 to 298 (RT) contribute to the NADP(+) site.

The protein belongs to the FAD-binding monooxygenase family. Requires FAD as cofactor.

It participates in secondary metabolite biosynthesis; terpenoid biosynthesis. In terms of biological role, FAD-binding monooxygenase; part of the gene cluster that mediates the biosynthesis of terretonin, a fungal meroterpenoid that acts as a mycotoxin. The first step of the pathway is the synthesis of 3,5-dimethylorsellinic acid (DMOA) by the polyketide synthase trt4. DMOA is then prenylated into farnesyl-DMOA by the polyprenyl transferase trt2. Methylation by the methyltransferase trt5 then leads to farnesyl-DMOA methyl ester which is further subject to epoxidation by the FAD-dependent monooxygenase trt8 to yield epoxyfarnesyl-DMOA methyl ester. Cyclization of epoxyfarnesyl-DMOA methyl ester by the terpene cyclase trt1 leads to a tetracycle intermediate which is in turn converted to preterretonin. Dehydrogenase trt9 comes next to transform preterretonin to preterrenoid. The FAD-dependent monooxygenase trt3 is then required for the C-hydroxylation at C16 of preterrenoid to yield terrenoid. The cytochrome P450 trt6 catalyzes three successive oxidations to transform terrenoid into an unstable intermediate, which then undergoes the D-ring expansion and unusual rearrangement of the methoxy group to afford the core skeleton of terretonin. Trt14 catalyzes the D-ring expansion of terretonin involving intramolecular methoxy rearrangement as well as the hydrolysis of the expanded D-ring and the methyl ester moiety. Finally, the nonheme iron-dependent dioxygenase trt7 accomplishes the last two oxidation reactions steps to complete the biosynthesis of terretonin. Terretonin C is produced via spontaneous decarboxylation of the terretonin precursor. Another shunt product of the terretonin biosynthesis is dihydrofarnesyl-DMOA, derived from epoxyfarnesyl-DMOA through hydrolysis of the epoxide. This Aspergillus terreus (strain NIH 2624 / FGSC A1156) protein is FAD-binding monooxygenase trt3.